A 219-amino-acid chain; its full sequence is Probable octanoyltransferase (219 aa).

The 177-residue stretch at 43–219 (QPPKPTIITS…NNLDSFLMSK (177 aa)) folds into the BPL/LPL catalytic domain. Substrate contacts are provided by residues 83-90 (RGGQTTFH), 151-153 (AIG), and 164-166 (GLA). Cysteine 182 functions as the Acyl-thioester intermediate in the catalytic mechanism.

The protein belongs to the LipB family.

The enzyme catalyses octanoyl-[ACP] + L-lysyl-[protein] = N(6)-octanoyl-L-lysyl-[protein] + holo-[ACP] + H(+). The protein operates within protein modification; protein lipoylation via endogenous pathway; protein N(6)-(lipoyl)lysine from octanoyl-[acyl-carrier-protein]: step 1/2. Its function is as follows. Catalyzes the transfer of endogenously produced octanoic acid from octanoyl-acyl-carrier-protein onto the lipoyl domains of lipoate-dependent enzymes. Lipoyl-ACP can also act as a substrate although octanoyl-ACP is likely to be the physiological substrate. In Schizosaccharomyces pombe (strain 972 / ATCC 24843) (Fission yeast), this protein is Probable octanoyltransferase.